The sequence spans 344 residues: Anthranilate phosphoribosyltransferase (344 aa).

5-phospho-alpha-D-ribose 1-diphosphate contacts are provided by residues G80, G83–D84, T88, N90–T93, K108–S116, and S120. G80 is an anthranilate binding site. S92 contacts Mg(2+). N111 is an anthranilate binding site. R166 is a binding site for anthranilate. The Mg(2+) site is built by D229 and E230.

Belongs to the anthranilate phosphoribosyltransferase family. As to quaternary structure, homodimer. Mg(2+) is required as a cofactor.

The catalysed reaction is N-(5-phospho-beta-D-ribosyl)anthranilate + diphosphate = 5-phospho-alpha-D-ribose 1-diphosphate + anthranilate. It functions in the pathway amino-acid biosynthesis; L-tryptophan biosynthesis; L-tryptophan from chorismate: step 2/5. Functionally, catalyzes the transfer of the phosphoribosyl group of 5-phosphorylribose-1-pyrophosphate (PRPP) to anthranilate to yield N-(5'-phosphoribosyl)-anthranilate (PRA). In Chloroherpeton thalassium (strain ATCC 35110 / GB-78), this protein is Anthranilate phosphoribosyltransferase.